The sequence spans 134 residues: MKLNSIEVIGKRKSSIAKIILFLPKDGGGEILINGEKAFNYLQNNLRTLKVVCSPFELLNINNYKVHAYVKGGGLSGQADAIKLAISKSLSVFIEKEDKKKLKVNGFLTRNSLCKERRKYGLKKARKAPQFSKR.

Belongs to the universal ribosomal protein uS9 family.

It is found in the plastid. It localises to the chloroplast. In Euglena gracilis, this protein is Small ribosomal subunit protein uS9c (rps9).